Consider the following 219-residue polypeptide: MSESTLHVRYLGQQDYESVWHAMQEYTDNRDSSSPDQLWIVEHPPVFTQGQAGKSEHILNPGDIPVIQVDRGGQVTYHGPGQLVAYPLINIKRLKIGVRQLVTDIENSIVQMLENYQVKAYAKADAPGVYVDERKVASLGLRIRKGCSFHGLALNVDMDMSPFQRINPCGYAGLEMVQCKQLGGPQTVEEAGEQLVKTFSHNLGYQNLVHHQGLSQSYE.

The BPL/LPL catalytic domain occupies serine 32–asparagine 207. Residues arginine 71 to histidine 78, serine 138 to glycine 140, and glycine 151 to alanine 153 contribute to the substrate site. Cysteine 169 functions as the Acyl-thioester intermediate in the catalytic mechanism.

This sequence belongs to the LipB family.

The protein localises to the cytoplasm. The catalysed reaction is octanoyl-[ACP] + L-lysyl-[protein] = N(6)-octanoyl-L-lysyl-[protein] + holo-[ACP] + H(+). Its pathway is protein modification; protein lipoylation via endogenous pathway; protein N(6)-(lipoyl)lysine from octanoyl-[acyl-carrier-protein]: step 1/2. Its function is as follows. Catalyzes the transfer of endogenously produced octanoic acid from octanoyl-acyl-carrier-protein onto the lipoyl domains of lipoate-dependent enzymes. Lipoyl-ACP can also act as a substrate although octanoyl-ACP is likely to be the physiological substrate. This is Octanoyltransferase from Shewanella woodyi (strain ATCC 51908 / MS32).